Consider the following 416-residue polypeptide: Serine hydroxymethyltransferase 1 (416 aa).

Residues Leu121 and 125 to 127 (GHL) each bind (6S)-5,6,7,8-tetrahydrofolate. Lys229 is subject to N6-(pyridoxal phosphate)lysine. (6S)-5,6,7,8-tetrahydrofolate-binding positions include Glu245 and 354-356 (SPF).

This sequence belongs to the SHMT family. Homodimer. It depends on pyridoxal 5'-phosphate as a cofactor.

Its subcellular location is the cytoplasm. The enzyme catalyses (6R)-5,10-methylene-5,6,7,8-tetrahydrofolate + glycine + H2O = (6S)-5,6,7,8-tetrahydrofolate + L-serine. It functions in the pathway one-carbon metabolism; tetrahydrofolate interconversion. The protein operates within amino-acid biosynthesis; glycine biosynthesis; glycine from L-serine: step 1/1. Functionally, catalyzes the reversible interconversion of serine and glycine with tetrahydrofolate (THF) serving as the one-carbon carrier. This reaction serves as the major source of one-carbon groups required for the biosynthesis of purines, thymidylate, methionine, and other important biomolecules. Also exhibits THF-independent aldolase activity toward beta-hydroxyamino acids, producing glycine and aldehydes, via a retro-aldol mechanism. This is Serine hydroxymethyltransferase 1 from Vibrio cholerae serotype O1 (strain ATCC 39315 / El Tor Inaba N16961).